The primary structure comprises 298 residues: Lipoyl synthase (298 aa).

[4Fe-4S] cluster contacts are provided by C40, C45, C51, C67, C71, C74, and S280. One can recognise a Radical SAM core domain in the interval A53–S269.

Belongs to the radical SAM superfamily. Lipoyl synthase family. The cofactor is [4Fe-4S] cluster.

The protein localises to the cytoplasm. It carries out the reaction [[Fe-S] cluster scaffold protein carrying a second [4Fe-4S](2+) cluster] + N(6)-octanoyl-L-lysyl-[protein] + 2 oxidized [2Fe-2S]-[ferredoxin] + 2 S-adenosyl-L-methionine + 4 H(+) = [[Fe-S] cluster scaffold protein] + N(6)-[(R)-dihydrolipoyl]-L-lysyl-[protein] + 4 Fe(3+) + 2 hydrogen sulfide + 2 5'-deoxyadenosine + 2 L-methionine + 2 reduced [2Fe-2S]-[ferredoxin]. It functions in the pathway protein modification; protein lipoylation via endogenous pathway; protein N(6)-(lipoyl)lysine from octanoyl-[acyl-carrier-protein]. Its function is as follows. Catalyzes the radical-mediated insertion of two sulfur atoms into the C-6 and C-8 positions of the octanoyl moiety bound to the lipoyl domains of lipoate-dependent enzymes, thereby converting the octanoylated domains into lipoylated derivatives. The sequence is that of Lipoyl synthase from Bacillus anthracis (strain A0248).